A 254-amino-acid chain; its full sequence is 3-deoxy-manno-octulosonate cytidylyltransferase (254 aa).

Belongs to the KdsB family.

The protein localises to the cytoplasm. The catalysed reaction is 3-deoxy-alpha-D-manno-oct-2-ulosonate + CTP = CMP-3-deoxy-beta-D-manno-octulosonate + diphosphate. The protein operates within nucleotide-sugar biosynthesis; CMP-3-deoxy-D-manno-octulosonate biosynthesis; CMP-3-deoxy-D-manno-octulosonate from 3-deoxy-D-manno-octulosonate and CTP: step 1/1. Its pathway is bacterial outer membrane biogenesis; lipopolysaccharide biosynthesis. Functionally, activates KDO (a required 8-carbon sugar) for incorporation into bacterial lipopolysaccharide in Gram-negative bacteria. This is 3-deoxy-manno-octulosonate cytidylyltransferase from Pseudomonas putida (strain GB-1).